An 860-amino-acid chain; its full sequence is Pentatricopeptide repeat-containing protein At2g40720 (860 aa).

PPR repeat units follow at residues 59-93 (SVFT…GWRY), 94-124 (DPFI…WSQS), 132-166 (DVTV…GVRP), 167-203 (DAFS…SLDT), 204-234 (DSFL…IEDK), 236-270 (NVVL…SVKL), 271-305 (VSTS…GLHN), 306-340 (DPYV…RLEI), 341-371 (WNAM…SVLP), 372-406 (DSFT…PIQS), 407-437 (TSTI…MEEK), 438-472 (DMVA…DDSL), 475-509 (DSDI…GLVL), 510-540 (NVFV…MSTE), 541-575 (NMVA…GIFP), 576-610 (DSVS…GIPS), 611-641 (DTHL…MQHK), 642-676 (SLIT…GESP), 677-707 (DDVT…MKQD), and 713-743 (NMEH…MPIE). Residues 748–823 (IWLCLLSASR…QPGCSWIEVS (76 aa)) are type E motif. Positions 824 to 854 (DRTNVFFSGGSSSPMKAEIFNVLNRLKSNMV) are type E(+) motif.

The protein belongs to the PPR family. PCMP-E subfamily.

The polypeptide is Pentatricopeptide repeat-containing protein At2g40720 (PCMP-E26) (Arabidopsis thaliana (Mouse-ear cress)).